The primary structure comprises 662 residues: Transforming growth factor beta activator LRRC32 (662 aa).

The signal sequence occupies residues 1-17 (MRPQILLLLALLTLGLA). Topologically, residues 18 to 625 (AQRQDKVPCK…EDCEKGGLKN (608 aa)) are extracellular. Positions 21–48 (QDKVPCKMVDKKVSCQGLGLLQVPSVLP) constitute an LRRNT domain. 10 LRR repeats span residues 50 to 73 (DTET…GFYT), 74 to 95 (ALRH…AFQA), 98 to 119 (HLEH…SAGG), 125 to 145 (RVTS…ERLL), 150 to 171 (SLHT…TFRD), 174 to 195 (VLEQ…AFEG), 198 to 219 (RLTH…SLQQ), 220 to 240 (LRVL…SQPQ), 244 to 265 (QLTW…AALP), and 266 to 286 (RLIY…PPQD). The N-linked (GlcNAc...) asparagine glycan is linked to Asn203. 2 N-linked (GlcNAc...) asparagine glycosylation sites follow: Asn271 and Asn308. LRR repeat units lie at residues 316-339 (QLLN…EHLT), 340-361 (SLCF…RSGS), 364-385 (CLML…ARAL), 387-408 (SLRT…TFAN), 411-432 (SLQR…DEPG), 444-465 (SLHS…AFLH), 467-488 (PLTE…ALGG), 492-513 (SLEV…LPCF), 515-536 (CLKR…TQAV), and 537-558 (SLEV…AMGG). A glycan (N-linked (GlcNAc...) asparagine) is linked at Asn345. Asn545 carries an N-linked (GlcNAc...) asparagine glycan. One can recognise an LRRCT domain in the interval 571 to 620 (NPLSCCGNGWLAAQLHQGRVDVDATQDLICRFSSQEEVSLSHVRPEDCEK). Residues 626–646 (INLIIILTFILVSAILLTTLA) traverse the membrane as a helical segment. Over 647–662 (TCCCVRRQKFNQQYKA) the chain is Cytoplasmic.

It belongs to the LRRC32/LRRC33 family. In terms of assembly, interacts with TGFB1; associates via disulfide bonds with the Latency-associated peptide chain (LAP) regulatory chain of TGFB1, leading to regulate activation of TGF-beta-1. Interacts with TGFB2. Interacts with TGFB3; associates via disulfide bonds with the Latency-associated peptide chain (LAP) regulatory chain of TGFB3, leading to regulate activation of TGF-beta-3. Interacts with LAPTM4B; decreases TGFB1 production in regulatory T-cells.

It localises to the cell membrane. Its subcellular location is the cell surface. Its function is as follows. Key regulator of transforming growth factor beta (TGFB1, TGFB2 and TGFB3) that controls TGF-beta activation by maintaining it in a latent state during storage in extracellular space. Associates specifically via disulfide bonds with the Latency-associated peptide (LAP), which is the regulatory chain of TGF-beta, and regulates integrin-dependent activation of TGF-beta. Able to outcompete LTBP1 for binding to LAP regulatory chain of TGF-beta. Controls activation of TGF-beta-1 (TGFB1) on the surface of activated regulatory T-cells (Tregs). Required for epithelial fusion during palate development by regulating activation of TGF-beta-3 (TGFB3). In Pongo abelii (Sumatran orangutan), this protein is Transforming growth factor beta activator LRRC32.